A 354-amino-acid chain; its full sequence is Uroporphyrinogen decarboxylase (354 aa).

Substrate contacts are provided by residues 27–31, aspartate 77, tyrosine 154, threonine 209, and histidine 327; that span reads RQAGR.

This sequence belongs to the uroporphyrinogen decarboxylase family. As to quaternary structure, homodimer.

It is found in the cytoplasm. It carries out the reaction uroporphyrinogen III + 4 H(+) = coproporphyrinogen III + 4 CO2. The protein operates within porphyrin-containing compound metabolism; protoporphyrin-IX biosynthesis; coproporphyrinogen-III from 5-aminolevulinate: step 4/4. Catalyzes the decarboxylation of four acetate groups of uroporphyrinogen-III to yield coproporphyrinogen-III. The polypeptide is Uroporphyrinogen decarboxylase (Cronobacter sakazakii (strain ATCC BAA-894) (Enterobacter sakazakii)).